The chain runs to 214 residues: Calcineurin B-like protein 8 (214 aa).

EF-hand domains lie at 35-70 (EIEA…RNGS), 71-106 (MQNL…FHPY), 108-143 (PEHE…LLGE), and 152-187 (SIEA…NPSI). Ca(2+) is bound by residues D165, N167, D169, K171, and E176. At S205 the chain carries Phosphoserine.

Belongs to the calcineurin regulatory subunit family. In terms of assembly, interacts with CIPK23. Interacts with CIPK14 at the cell membrane exclusively.

Its subcellular location is the cytoplasm. The protein resides in the nucleus. The protein localises to the cell membrane. Functionally, acts as a calcium sensor. CBL proteins interact with CIPK serine-threonine protein kinases. Binding of a CBL protein to the regulatory NAF domain of a CIPK protein lead to the activation of the kinase in a calcium-dependent manner. This chain is Calcineurin B-like protein 8 (CBL8), found in Arabidopsis thaliana (Mouse-ear cress).